The primary structure comprises 240 residues: Uridylate kinase (240 aa).

Residue 12–15 (KLSG) participates in ATP binding. G54 contributes to the UMP binding site. Residues G55 and R59 each contribute to the ATP site. UMP contacts are provided by residues D74 and 135–142 (TGNPFFTT). Positions 162, 168, and 171 each coordinate ATP.

The protein belongs to the UMP kinase family. Homohexamer.

The protein localises to the cytoplasm. It carries out the reaction UMP + ATP = UDP + ADP. It functions in the pathway pyrimidine metabolism; CTP biosynthesis via de novo pathway; UDP from UMP (UMPK route): step 1/1. Its activity is regulated as follows. Inhibited by UTP. In terms of biological role, catalyzes the reversible phosphorylation of UMP to UDP. The polypeptide is Uridylate kinase (Xanthomonas campestris pv. campestris (strain ATCC 33913 / DSM 3586 / NCPPB 528 / LMG 568 / P 25)).